The sequence spans 800 residues: Isoamylase 2, chloroplastic (800 aa).

The span at 1-10 (MASLPAPPTP) shows a compositional bias: pro residues. The interval 1 to 22 (MASLPAPPTPLGSCPRGRGGGR) is disordered. A chloroplast-targeting transit peptide spans 1–34 (MASLPAPPTPLGSCPRGRGGGRVVARPRRAGLAC).

This sequence belongs to the glycosyl hydrolase 13 family. In terms of assembly, forms a hetero-hexamer composed of five ISA1 and one ISA2. Highly expressed in developing endosperm and leaves.

Its subcellular location is the plastid. It localises to the chloroplast. It catalyses the reaction Hydrolysis of (1-&gt;6)-alpha-D-glucosidic branch linkages in glycogen, amylopectin and their beta-limit dextrins.. In terms of biological role, starch-debranching enzyme involved in amylopectin biosynthesis in endosperm. Functions by removing excess branches or improper branches that interfere with the formation of double helices of the cluster chains of amylopectin and crystallization of starch. Works together with ISA1 as heterooligomer. The heterooligomer ISA1 and ISA2 possesses higher affinity than the ISA1 homooligomer for various branched polyglucans in vitro, but no marked differences exist in chain preferences for debranching of amylopectin and phytoglycogen between these forms. In Oryza sativa subsp. japonica (Rice), this protein is Isoamylase 2, chloroplastic.